A 42-amino-acid polypeptide reads, in one-letter code: Crotamine-IV-2 (42 aa).

3 disulfide bridges follow: cysteine 4–cysteine 37, cysteine 11–cysteine 31, and cysteine 19–cysteine 38.

The protein belongs to the crotamine-myotoxin family. As to quaternary structure, monomer. In terms of tissue distribution, expressed by the venom gland.

It localises to the secreted. Functionally, cationic peptide that possesses multiple functions. It acts as a cell-penetrating peptide (CPP), and as a potent voltage-gated potassium channel (Kv) inhibitor. It exhibits antimicrobial activities, and hind limb paralysis. It also induces potent blockade of neuromuscular transmission in young chicken biventer cervicis preparation and potent myotoxic effect. In vivo, induces myonecrosis, upon intramuscular or subcutaneous injections into mice. This chain is Crotamine-IV-2, found in Crotalus durissus cumanensis (South American rattlesnake).